The following is a 189-amino-acid chain: NADH-quinone oxidoreductase subunit B (189 aa).

Positions 39, 40, 104, and 135 each coordinate [4Fe-4S] cluster.

It belongs to the complex I 20 kDa subunit family. As to quaternary structure, NDH-1 is composed of 14 different subunits. Subunits NuoB, C, D, E, F, and G constitute the peripheral sector of the complex. [4Fe-4S] cluster is required as a cofactor.

The protein localises to the cell inner membrane. It carries out the reaction a quinone + NADH + 5 H(+)(in) = a quinol + NAD(+) + 4 H(+)(out). Functionally, NDH-1 shuttles electrons from NADH, via FMN and iron-sulfur (Fe-S) centers, to quinones in the respiratory chain. The immediate electron acceptor for the enzyme in this species is believed to be a menaquinone. Couples the redox reaction to proton translocation (for every two electrons transferred, four hydrogen ions are translocated across the cytoplasmic membrane), and thus conserves the redox energy in a proton gradient. The sequence is that of NADH-quinone oxidoreductase subunit B from Chlorobaculum parvum (strain DSM 263 / NCIMB 8327) (Chlorobium vibrioforme subsp. thiosulfatophilum).